A 640-amino-acid chain; its full sequence is LRR receptor kinase SERL2 (640 aa).

The N-terminal stretch at 1–22 is a signal peptide; that stretch reads MEPPFFLLLLLLVVSSSSPSAA. The Extracellular portion of the chain corresponds to 23–241; that stretch reads LLSAKGVNNE…AARDRGHKFA (219 aa). Residues asparagine 94 and asparagine 107 are each glycosylated (N-linked (GlcNAc...) asparagine). LRR repeat units follow at residues 95-119, 120-143, 145-167, and 168-191; these read LTNLETVLLQNNNITGPIPAEIGRL, ENLKTLDLSSNSFYGEIPSSVGHL, SLQYLRLNNNTLSGPFPSASANL, and SHLVFLDLSYNNLSGPIPESLART. 4 N-linked (GlcNAc...) asparagine glycosylation sites follow: asparagine 153, asparagine 166, asparagine 179, and asparagine 222. Residues 242 to 262 traverse the membrane as a helical segment; it reads VAFGSTAGCMGLLLLAAGFLF. At 263–640 the chain is on the cytoplasmic side; the sequence is WWRHRRNRQI…VQAVELSGPR (378 aa). The 280-residue stretch at 304-583 folds into the Protein kinase domain; it reads FSGKNILGKG…EGDGLADRWE (280 aa). ATP contacts are provided by residues 310–318 and lysine 332; that span reads LGKGGFGNV. Aspartate 427 functions as the Proton acceptor in the catalytic mechanism.

Belongs to the protein kinase superfamily. Ser/Thr protein kinase family. As to quaternary structure, interacts with MSBP1.

It is found in the cell membrane. The catalysed reaction is L-seryl-[protein] + ATP = O-phospho-L-seryl-[protein] + ADP + H(+). It carries out the reaction L-threonyl-[protein] + ATP = O-phospho-L-threonyl-[protein] + ADP + H(+). Its function is as follows. LRR receptor kinase that may be involved in defense response. This chain is LRR receptor kinase SERL2, found in Oryza sativa subsp. japonica (Rice).